The chain runs to 416 residues: Peptide chain release factor subunit 1 (416 aa).

The protein belongs to the eukaryotic release factor 1 family. As to quaternary structure, heterodimer of two subunits, one of which binds GTP.

The protein localises to the cytoplasm. Functionally, directs the termination of nascent peptide synthesis (translation) in response to the termination codons UAA, UAG and UGA. This Halorubrum lacusprofundi (strain ATCC 49239 / DSM 5036 / JCM 8891 / ACAM 34) protein is Peptide chain release factor subunit 1.